Here is a 264-residue protein sequence, read N- to C-terminus: Thymidylate synthase (264 aa).

Arg21 provides a ligand contact to dUMP. A (6R)-5,10-methylene-5,6,7,8-tetrahydrofolate-binding site is contributed by His51. 126-127 (RR) is a binding site for dUMP. Cys146 functions as the Nucleophile in the catalytic mechanism. DUMP-binding positions include 166–169 (RSCD), Asn177, and 207–209 (HLY). Asp169 lines the (6R)-5,10-methylene-5,6,7,8-tetrahydrofolate pocket. Ser263 lines the (6R)-5,10-methylene-5,6,7,8-tetrahydrofolate pocket.

The protein belongs to the thymidylate synthase family. Bacterial-type ThyA subfamily. In terms of assembly, homodimer.

The protein resides in the cytoplasm. The catalysed reaction is dUMP + (6R)-5,10-methylene-5,6,7,8-tetrahydrofolate = 7,8-dihydrofolate + dTMP. Its pathway is pyrimidine metabolism; dTTP biosynthesis. Functionally, catalyzes the reductive methylation of 2'-deoxyuridine-5'-monophosphate (dUMP) to 2'-deoxythymidine-5'-monophosphate (dTMP) while utilizing 5,10-methylenetetrahydrofolate (mTHF) as the methyl donor and reductant in the reaction, yielding dihydrofolate (DHF) as a by-product. This enzymatic reaction provides an intracellular de novo source of dTMP, an essential precursor for DNA biosynthesis. The chain is Thymidylate synthase from Buchnera aphidicola subsp. Acyrthosiphon pisum (strain 5A).